A 122-amino-acid polypeptide reads, in one-letter code: Large ribosomal subunit protein uL14 (122 aa).

This sequence belongs to the universal ribosomal protein uL14 family. In terms of assembly, part of the 50S ribosomal subunit. Forms a cluster with proteins L3 and L19. In the 70S ribosome, L14 and L19 interact and together make contacts with the 16S rRNA in bridges B5 and B8.

Its function is as follows. Binds to 23S rRNA. Forms part of two intersubunit bridges in the 70S ribosome. In Shewanella loihica (strain ATCC BAA-1088 / PV-4), this protein is Large ribosomal subunit protein uL14.